A 127-amino-acid polypeptide reads, in one-letter code: Anti-adapter protein IraD (127 aa).

The protein belongs to the GpW/Gp25 family. IraD subfamily. As to quaternary structure, interacts with RssB.

It localises to the cytoplasm. Its function is as follows. Inhibits RpoS proteolysis by regulating RssB activity, thereby increasing the stability of the sigma stress factor RpoS during oxidative stress. Its effect on RpoS stability is due to its interaction with RssB, which probably blocks the interaction of RssB with RpoS, and the consequent delivery of the RssB-RpoS complex to the ClpXP protein degradation pathway. The polypeptide is Anti-adapter protein IraD (Escherichia coli (strain UTI89 / UPEC)).